The sequence spans 514 residues: Histidine ammonia-lyase (514 aa).

The 5-imidazolinone (Ala-Gly) cross-link spans 142–144 (ASG). S143 bears the 2,3-didehydroalanine (Ser) mark.

Belongs to the PAL/histidase family. Post-translationally, contains an active site 4-methylidene-imidazol-5-one (MIO), which is formed autocatalytically by cyclization and dehydration of residues Ala-Ser-Gly.

Its subcellular location is the cytoplasm. It carries out the reaction L-histidine = trans-urocanate + NH4(+). The protein operates within amino-acid degradation; L-histidine degradation into L-glutamate; N-formimidoyl-L-glutamate from L-histidine: step 1/3. The sequence is that of Histidine ammonia-lyase from Sorangium cellulosum (strain So ce56) (Polyangium cellulosum (strain So ce56)).